The chain runs to 362 residues: Beta-ketoacyl-[acyl-carrier-protein] synthase III 2 (362 aa).

Active-site residues include Cys-113 and His-251. Residues Gln-252–Arg-256 form an ACP-binding region. Asn-281 is a catalytic residue.

It belongs to the thiolase-like superfamily. FabH family. In terms of assembly, homodimer.

Its subcellular location is the cytoplasm. The enzyme catalyses malonyl-[ACP] + acetyl-CoA + H(+) = 3-oxobutanoyl-[ACP] + CO2 + CoA. Its pathway is lipid metabolism; fatty acid biosynthesis. In terms of biological role, catalyzes the condensation reaction of fatty acid synthesis by the addition to an acyl acceptor of two carbons from malonyl-ACP. Catalyzes the first condensation reaction which initiates fatty acid synthesis and may therefore play a role in governing the total rate of fatty acid production. Possesses both acetoacetyl-ACP synthase and acetyl transacylase activities. Its substrate specificity determines the biosynthesis of branched-chain and/or straight-chain of fatty acids. The sequence is that of Beta-ketoacyl-[acyl-carrier-protein] synthase III 2 from Vibrio cholerae serotype O1 (strain ATCC 39315 / El Tor Inaba N16961).